The following is a 785-amino-acid chain: MSEFWNNNKDTIGAGLKTVGKYSYKSTKFVAKTGYQAGKSHYQNSKAKREGRSQEGSDDSGQTTPNVHINYKDPSAFPPPPVKPGQLQYHGSSGNSANGSSATIPTLSNTNNTAQLNEQPYMNQINSSNQIYSRPQMAIPEQQVATPEQQMNSTTLPSQPQMAVPSQQEHIHIQPSNPQQLPSNYKPQEQYLQSEQLNISDRHAPQPMERPAMPLPQHGNVPPLTTENVHPNIEADISSPAVGPQFEVKPYDWEEQKTTKIEIPQVDLTSIPPPPTHRDRNTSRQGSNSTPPSRTHTGNNTSTASVTTTGIVDGNLESNQEHTPKPAILGEYDDTLNVAYAPPPKPFRRATNNSSDLKLSGAQNTKTPPPPVVLTNKSAERPNSSNVMPSLPLRQMNTKANSSENLPKAKILGEYETNVDVGIAPPPRPTYRKTDTEANPPNRPLSRSTTEHKMSSISRDNYNSIKSSSVKPPVPKRNTGEREGAQELKADIAERSQEITPTPGISGIYNLDKKIDFAPPPKPFRRAQTSSDIPQKSSLVTDESNISVPNKSQQPMQEKDSIKNATPLYIPPSNNINFPPPPKPHNKSLEESHTPSNKLSEKPKPPKKPEQLKDLNLSTQQADKNMKNKDQLFDNKNELLSTIKNKKRPAPIPKPKPKSLTSEGNHMNLNTEKGKETTIEKPDESKFLPISSFPPPPKPFKREELSKEVVDSVGETADFTKPKRAGQLESTQTEKSNSKGKAPPPVPKKRNAQSKSSPSLEGSEDNPFSKYLKDAVPNEPDRLHK.

Disordered stretches follow at residues 33–122 (TGYQ…QPYM), 142–406 (QQVA…SENL), and 418–785 (NVDV…RLHK). The span at 91–102 (GSSGNSANGSSA) shows a compositional bias: low complexity. Composition is skewed to polar residues over residues 103 to 122 (TIPTLSNTNNTAQLNEQPYM) and 143 to 199 (QVAT…QLNI). A compositionally biased stretch (basic and acidic residues) spans 249–260 (KPYDWEEQKTTK). 5 stretches are compositionally biased toward polar residues: residues 283 to 310 (SRQGSNSTPPSRTHTGNNTSTASVTTTG), 350 to 366 (ATNNSSDLKLSGAQNTK), 375 to 388 (TNKSAERPNSSNVM), 395 to 405 (QMNTKANSSEN), and 455 to 465 (SSISRDNYNSI). Residues 478–497 (NTGEREGAQELKADIAERSQ) are compositionally biased toward basic and acidic residues. The span at 527–556 (AQTSSDIPQKSSLVTDESNISVPNKSQQPM) shows a compositional bias: polar residues. Composition is skewed to basic and acidic residues over residues 587 to 613 (KSLEESHTPSNKLSEKPKPPKKPEQLK) and 624 to 637 (KNMKNKDQLFDNKN). A compositionally biased stretch (polar residues) spans 659–671 (SLTSEGNHMNLNT). 2 stretches are compositionally biased toward basic and acidic residues: residues 672 to 686 (EKGKETTIEKPDESK) and 700 to 710 (FKREELSKEVV).

The protein belongs to the AIM3 family.

Its subcellular location is the membrane raft. The polypeptide is Altered inheritance of mitochondria protein 3-2 (AIM3-2) (Candida glabrata (strain ATCC 2001 / BCRC 20586 / JCM 3761 / NBRC 0622 / NRRL Y-65 / CBS 138) (Yeast)).